Consider the following 167-residue polypeptide: Regulatory protein RecX (167 aa).

Positions 19–49 (ESELRRKLASQPFSAKGHWGKQTGRSDNEPV) are disordered.

Belongs to the RecX family.

The protein resides in the cytoplasm. Modulates RecA activity. The chain is Regulatory protein RecX from Yersinia enterocolitica serotype O:8 / biotype 1B (strain NCTC 13174 / 8081).